The following is a 1182-amino-acid chain: Myosin IC heavy chain (1182 aa).

A Myosin motor domain is found at glutamate 15–glutamate 698. Residue glycine 109–threonine 116 coordinates ATP. The actin-binding stretch occupies residues alanine 571–aspartate 593. One can recognise a TH1 domain in the interval arginine 774–alanine 957. Disordered stretches follow at residues lysine 999 to glycine 1052 and serine 1064 to glutamine 1103. The segment covering lysine 1013–proline 1042 has biased composition (low complexity). A compositionally biased stretch (pro residues) spans proline 1081–alanine 1092. One can recognise an SH3 domain in the interval proline 1123–isoleucine 1182.

It belongs to the TRAFAC class myosin-kinesin ATPase superfamily. Myosin family. Myosin I heavy chain is single-headed. Dimer of a heavy and a light chain. Inability to self-assemble into filaments.

The protein localises to the cell projection. It is found in the lamellipodium. In terms of biological role, myosin is a protein that binds to actin and has ATPase activity that is activated by actin. Involved in the process of phagocytosis and appears to support streaming behavior. This is Myosin IC heavy chain (myoC) from Dictyostelium discoideum (Social amoeba).